A 674-amino-acid chain; its full sequence is Cysteine-rich receptor-like protein kinase 6 (674 aa).

Positions 1 to 24 (MSSLISFNFLFLFSFLTSSFTASA) are cleaved as a signal peptide. The Extracellular portion of the chain corresponds to 25 to 289 (QDPFYLNHYC…LPGKSGNSTV (265 aa)). Gnk2-homologous domains lie at 28 to 132 (FYLN…HKNI) and 139 to 245 (NEGE…LYPF). N-linked (GlcNAc...) asparagine glycans are attached at residues N36, N43, N61, N70, N104, N178, and N247. Residues 254–266 (PPLPPPPPPPPPR) show a composition bias toward pro residues. The segment at 254–284 (PPLPPPPPPPPPRESLVSTPPISSSSLPGKS) is disordered. The span at 268-284 (SLVSTPPISSSSLPGKS) shows a compositional bias: low complexity. N-linked (GlcNAc...) asparagine glycosylation is present at N286. Residues 290 to 310 (LVVAVVVLAVLLFIALVGYCF) form a helical membrane-spanning segment. Over 311 to 674 (LAKKKKKTFD…DESITDLYPR (364 aa)) the chain is Cytoplasmic. One can recognise a Protein kinase domain in the interval 351-637 (FAESNKIGRG…TLPVPRQPGF (287 aa)). Residues 357-365 (IGRGGFGEV) and K379 each bind ATP. Phosphotyrosine is present on Y424. Catalysis depends on D476, which acts as the Proton acceptor. S480 is subject to Phosphoserine. T516 is modified (phosphothreonine). Position 524 is a phosphotyrosine (Y524). Positions 648-674 (LDSDQSTTTKSFPASIDDESITDLYPR) are disordered. The segment covering 650-659 (SDQSTTTKSF) has biased composition (polar residues).

It belongs to the protein kinase superfamily. Ser/Thr protein kinase family. CRK subfamily.

The protein resides in the membrane. It carries out the reaction L-seryl-[protein] + ATP = O-phospho-L-seryl-[protein] + ADP + H(+). The catalysed reaction is L-threonyl-[protein] + ATP = O-phospho-L-threonyl-[protein] + ADP + H(+). This is Cysteine-rich receptor-like protein kinase 6 (CRK6) from Arabidopsis thaliana (Mouse-ear cress).